Consider the following 506-residue polypeptide: Glutamate--tRNA ligase (506 aa).

Residues 24–34 carry the 'HIGH' region motif; that stretch reads PSPTGLQHIGG. Positions 121, 123, 148, and 150 each coordinate Zn(2+). A 'KMSKS' region motif is present at residues 266–270; that stretch reads KLSKR. An ATP-binding site is contributed by K269.

This sequence belongs to the class-I aminoacyl-tRNA synthetase family. Glutamate--tRNA ligase type 1 subfamily. Monomer. The cofactor is Zn(2+).

The protein resides in the cytoplasm. The enzyme catalyses tRNA(Glu) + L-glutamate + ATP = L-glutamyl-tRNA(Glu) + AMP + diphosphate. In terms of biological role, catalyzes the attachment of glutamate to tRNA(Glu) in a two-step reaction: glutamate is first activated by ATP to form Glu-AMP and then transferred to the acceptor end of tRNA(Glu). This Borrelia recurrentis (strain A1) protein is Glutamate--tRNA ligase.